Consider the following 823-residue polypeptide: Leucine--tRNA ligase (823 aa).

The short motif at 42–52 (PYPSGTLHMGH) is the 'HIGH' region element. The 'KMSKS' region signature appears at 575–579 (KMSKS). ATP is bound at residue Lys-578.

The protein belongs to the class-I aminoacyl-tRNA synthetase family.

Its subcellular location is the cytoplasm. It carries out the reaction tRNA(Leu) + L-leucine + ATP = L-leucyl-tRNA(Leu) + AMP + diphosphate. The sequence is that of Leucine--tRNA ligase from Legionella pneumophila (strain Corby).